The primary structure comprises 201 residues: MSRYRGPRLKKIRRLGALPGLTRKTPKSGSNQKKKFHSGKKEQYRIRLQEKQKLRFHYGLTERQLLRYVHIAGKAKRSTGQVLLQLLEMRLDNILFRLGMASTIPGARQLVNHRHILVNGRIVDIPSFRCKPRDIITTKDNQRSKRLVQNYIASSDPGKLPKHLTVDTLQYKGLVKKILDRKWVGLKINELLVVEYYSRQT.

Residues 15-43 (LGALPGLTRKTPKSGSNQKKKFHSGKKEQ) are disordered. The S4 RNA-binding domain occupies 89-150 (MRLDNILFRL…NQRSKRLVQN (62 aa)).

It belongs to the universal ribosomal protein uS4 family. Part of the 30S ribosomal subunit. Contacts protein S5. The interaction surface between S4 and S5 is involved in control of translational fidelity.

It is found in the plastid. It localises to the chloroplast. In terms of biological role, one of the primary rRNA binding proteins, it binds directly to 16S rRNA where it nucleates assembly of the body of the 30S subunit. Its function is as follows. With S5 and S12 plays an important role in translational accuracy. In Sorghum bicolor (Sorghum), this protein is Small ribosomal subunit protein uS4c (rps4).